Consider the following 648-residue polypeptide: RAF proto-oncogene serine/threonine-protein kinase (648 aa).

Residue Ser-29 is modified to Phosphoserine; by MAPK1. Position 43 is a phosphoserine; by PKA and MAPK1 (Ser-43). The RBD domain occupies 56–131; the sequence is NTIRVFLPNK…IGEELQVDFL (76 aa). The segment at 138-184 adopts a Phorbol-ester/DAG-type zinc-finger fold; that stretch reads THNFARKTFLKLAFCDICQKFLLNGFRCQTCGYKFHEHCSTKVPTMC. Zn(2+) is bound by residues His-139, Cys-152, Cys-155, Cys-165, Cys-168, His-173, Cys-176, and Cys-184. Positions 220–334 are disordered; it reads SVSRMPVSSQ…QEKNKIRPRG (115 aa). Over residues 239–271 the composition is skewed to polar residues; it reads TFNTSSPSSEGSLSQRQRSTSTPNVHMVSTTLP. Residue Ser-252 is modified to Phosphoserine. Ser-259 is subject to Phosphoserine; by PKA, PKC and PKB/AKT1. Thr-268 is modified (phosphothreonine; by autocatalysis). A Phosphothreonine; by PKA modification is found at Thr-269. Residues 275–285 are compositionally biased toward basic and acidic residues; it reads RMIEDAIRSHS. Residues 286–301 are compositionally biased toward low complexity; sequence ESASPSALSSSPNNLS. Ser-289 carries the post-translational modification Phosphoserine; by MAPK1. Ser-296 carries the phosphoserine modification. The residue at position 301 (Ser-301) is a Phosphoserine; by MAPK1. The segment at 331–349 is interaction with PEBP1/RKIP; sequence RPRGQRDSSYYWEIEASEV. Ser-338 is modified (phosphoserine; by PAK1, PAK2, PAK3 and PAK5). Ser-339 is subject to Phosphoserine; by PAK1, PAK2 and PAK3. Phosphotyrosine; by SRC occurs at positions 340 and 341. One can recognise a Protein kinase domain in the interval 349-609; it reads VMLSTRIGSG…PQILSSIELL (261 aa). Residues 355-363 and Lys-375 contribute to the ATP site; that span reads IGSGSFGTV. Asp-468 functions as the Proton acceptor in the catalytic mechanism. Ser-471 is modified (phosphoserine). Thr-491 is modified (phosphothreonine). Ser-494 bears the Phosphoserine mark. At Ser-499 the chain carries Phosphoserine; by PKC. Arg-563 carries the symmetric dimethylarginine; by PRMT5 modification. Ser-621 is modified (phosphoserine). Ser-642 is modified (phosphoserine; by MAPK1).

It belongs to the protein kinase superfamily. TKL Ser/Thr protein kinase family. RAF subfamily. In terms of assembly, monomer. Homodimer. Heterodimerizes with BRAF and this heterodimer possesses a highly increased kinase activity compared to the respective homodimers or monomers. Heterodimerization is mitogen-regulated and enhanced by 14-3-3 proteins. MAPK1/ERK2 activation can induce a negative feedback that promotes the dissociation of the heterodimer. Forms a multiprotein complex with Ras (M-Ras/MRAS), SHOC2 and protein phosphatase 1 (PPP1CA, PPP1CB and PPP1CC). Interacts with LZTR1. Interacts with Ras proteins; the interaction is antagonized by RIN1. Weakly interacts with RIT1. Interacts (via N-terminus) with RGS14 (via RBD domains); the interaction mediates the formation of a ternary complex with BRAF, a ternary complex inhibited by GNAI1. Probably forms a complex composed of chaperones HSP90 and HSP70, co-chaperones CDC37, PPP5C, TSC1 and client protein TSC2, CDK4, AKT, RAF1 and NR3C1; this complex does not contain co-chaperones STIP1/HOP and PTGES3/p23. Interacts with STK3/MST2; the interaction inhibits its pro-apoptotic activity. Interacts (when phosphorylated at Ser-259) with YWHAZ (unphosphorylated at 'Thr-232'). Interacts with MAP2K1/MEK1 and MAP2K2/MEK2. Interacts with MAP3K5/ASF1 (via N-terminus) and this interaction inhibits the proapoptotic function of MAP3K5/ASK1. Interacts with PAK1 (via kinase domain). The phosphorylated form interacts with PIN1. The Ser-338 and Ser-339 phosphorylated form (by PAK1) interacts with BCL2. Interacts with PEBP1/RKIP and this interaction is enhanced if RAF1 is phosphorylated on residues Ser-338, Ser-339, Tyr-340 and Tyr-341. Interacts with ADCY2, ADCY5, ADCY6, DGKH, RCAN1/DSCR1, PPP1R12A, PKB/AKT1, PPP2CA, PPP2R1B, SPRY2, SPRY4, CNKSR1/CNK1, KSR2 and PHB/prohibitin. Interacts with ROCK2. In its active form, interacts with PRMT5. Interacts with FAM83B; displaces 14-3-3 proteins from RAF1 and activates RAF1. Interacts with PDE8A; the interaction promotes RAF1 activity. Interacts with MFHAS1. Interacts with GLS. Interacts with NEK10 and MAP2K1; the interaction is direct with NEK10 and required for ERK1/2-signaling pathway activation in response to UV irradiation. Zn(2+) serves as cofactor. In terms of processing, phosphorylation at Thr-269, Ser-338, Tyr-341, Thr-491 and Ser-494 results in its activation. Phosphorylation at Ser-29, Ser-43, Ser-289, Ser-296, Ser-301 and Ser-642 by MAPK1/ERK2 results in its inactivation. Phosphorylation at Ser-259 induces the interaction with YWHAZ and inactivates kinase activity. Dephosphorylation of Ser-259 by the SHOC2-MRAS-PP1c (SMP) complex consisting of SHOC2, GTP-bound M-Ras/MRAS and the catalytic subunit of protein phosphatase 1 (PPP1CA, PPP1CB or PPP1CC); this relieves inactivation and stimulates kinase activity. Phosphorylation at Ser-338 by PAK1 and PAK5 and Ser-339 by PAK1 is required for its mitochondrial localization. Phosphorylation at Ser-621 in response to growth factor treatment stabilizes the protein, possibly by preventing proteasomal degradation. Phosphorylation at Ser-289, Ser-296, Ser-301, Ser-338 and Ser-621 are somehow linked to the methylation potential of cells. Treatment of cells with HGF in the presence of the methylation inhibitor 5'-methylthioadenosine (MTA) results in increased phosphorylation at Ser-338 and Ser-621 and decreased phosphorylation at Ser-296, Ser-301 and Ser-338. Dephosphorylation at Ser-338 by PPP5C results in an activity decrease. Post-translationally, methylated at Arg-563 in response to EGF treatment. This modification leads to destabilization of the protein, possibly through proteasomal degradation. As to expression, in skeletal muscle, isoform 1 is more abundant than isoform 2.

Its subcellular location is the cytoplasm. The protein localises to the cell membrane. It localises to the mitochondrion. The protein resides in the nucleus. The catalysed reaction is L-seryl-[protein] + ATP = O-phospho-L-seryl-[protein] + ADP + H(+). It catalyses the reaction L-threonyl-[protein] + ATP = O-phospho-L-threonyl-[protein] + ADP + H(+). With respect to regulation, regulation is a highly complex process involving membrane recruitment, protein-protein interactions, dimerization, and phosphorylation/dephosphorylation events. Ras-GTP recruits RAF1 to the membrane, thereby promoting its activation. The inactive conformation of RAF1 is maintained by autoinhibitory interactions occurring between the N-terminal regulatory and the C-terminal catalytic domains and by the binding of a 14-3-3 protein that contacts two phosphorylation sites, Ser-259 and Ser-621. Upon mitogenic stimulation, Ras and PPP2R1A cooperate to release autoinhibition and the subsequent phosphorylation of activating sites: Ser-338, Tyr-341, Thr-491, and Ser-494, yields a fully active kinase. Through a negative feedback mechanism involving MAPK1/ERK2, RAF1 is phosphorylated on Ser-29, Ser-43, Ser-289, Ser-296, Ser-301 and Ser-642 by MAPK1/ERK2, which yields an inactive, desensitized kinase. The signaling-competent conformation of RAF1 is finally re-established by the coordinated action of PIN1, a prolyl isomerase that converts pSer and pThr residues from the cis to the trans conformation, which is preferentially recognized and dephosphorylated by PPP2R1A. Activated by homodimerization and heterodimerization (with BRAF). Also regulated through association with other proteins such as KSR2, CNKSR1/CNK1, PEBP1/RKIP, PHB/prohibitin and SPRY4. PEBP1/RKIP acts by dissociating RAF1 from its substrates MAP2K1/MEK1 and MAP2K2/MEK2. PHB/prohibitin facilitates the displacement of 14-3-3 from RAF1 by activated Ras, thereby promoting cell membrane localization and phosphorylation of RAF1 at the activating Ser-338. SPRY4 inhibits Ras-independent, but not Ras-dependent, activation of RAF1. CNKSR1/CNK1 regulates Src-mediated RAF1 activation. Serine/threonine-protein kinase that acts as a regulatory link between the membrane-associated Ras GTPases and the MAPK/ERK cascade, and this critical regulatory link functions as a switch determining cell fate decisions including proliferation, differentiation, apoptosis, survival and oncogenic transformation. RAF1 activation initiates a mitogen-activated protein kinase (MAPK) cascade that comprises a sequential phosphorylation of the dual-specific MAPK kinases (MAP2K1/MEK1 and MAP2K2/MEK2) and the extracellular signal-regulated kinases (MAPK3/ERK1 and MAPK1/ERK2). The phosphorylated form of RAF1 (on residues Ser-338 and Ser-339, by PAK1) phosphorylates BAD/Bcl2-antagonist of cell death at 'Ser-75'. Phosphorylates adenylyl cyclases: ADCY2, ADCY5 and ADCY6, resulting in their activation. Phosphorylates PPP1R12A resulting in inhibition of the phosphatase activity. Phosphorylates TNNT2/cardiac muscle troponin T. Can promote NF-kB activation and inhibit signal transducers involved in motility (ROCK2), apoptosis (MAP3K5/ASK1 and STK3/MST2), proliferation and angiogenesis (RB1). Can protect cells from apoptosis also by translocating to the mitochondria where it binds BCL2 and displaces BAD/Bcl2-antagonist of cell death. Regulates Rho signaling and migration, and is required for normal wound healing. Plays a role in the oncogenic transformation of epithelial cells via repression of the TJ protein, occludin (OCLN) by inducing the up-regulation of a transcriptional repressor SNAI2/SLUG, which induces down-regulation of OCLN. Restricts caspase activation in response to selected stimuli, notably Fas stimulation, pathogen-mediated macrophage apoptosis, and erythroid differentiation. In Homo sapiens (Human), this protein is RAF proto-oncogene serine/threonine-protein kinase.